The sequence spans 258 residues: UPF0246 protein Sfri_2896 (258 aa).

It belongs to the UPF0246 family.

The sequence is that of UPF0246 protein Sfri_2896 from Shewanella frigidimarina (strain NCIMB 400).